A 210-amino-acid chain; its full sequence is Large ribosomal subunit protein bL25 (210 aa).

It belongs to the bacterial ribosomal protein bL25 family. CTC subfamily. As to quaternary structure, part of the 50S ribosomal subunit; part of the 5S rRNA/L5/L18/L25 subcomplex. Contacts the 5S rRNA. Binds to the 5S rRNA independently of L5 and L18.

Its function is as follows. This is one of the proteins that binds to the 5S RNA in the ribosome where it forms part of the central protuberance. The polypeptide is Large ribosomal subunit protein bL25 (Saccharophagus degradans (strain 2-40 / ATCC 43961 / DSM 17024)).